Reading from the N-terminus, the 293-residue chain is tRNA pseudouridine synthase A (293 aa).

Asp-60 acts as the Nucleophile in catalysis. Residue Tyr-118 coordinates substrate.

It belongs to the tRNA pseudouridine synthase TruA family. As to quaternary structure, homodimer.

It carries out the reaction uridine(38/39/40) in tRNA = pseudouridine(38/39/40) in tRNA. In terms of biological role, formation of pseudouridine at positions 38, 39 and 40 in the anticodon stem and loop of transfer RNAs. This chain is tRNA pseudouridine synthase A, found in Rippkaea orientalis (strain PCC 8801 / RF-1) (Cyanothece sp. (strain PCC 8801)).